The following is a 205-amino-acid chain: Recombination protein RecR (205 aa).

A C4-type zinc finger spans residues 59-74 (CAMCNTFCEGGLCDIC). A Toprim domain is found at 82-177 (RRLMVVHMPA…KVSRLSQGIP (96 aa)).

This sequence belongs to the RecR family.

Functionally, may play a role in DNA repair. It seems to be involved in an RecBC-independent recombinational process of DNA repair. It may act with RecF and RecO. This is Recombination protein RecR from Neisseria meningitidis serogroup C (strain 053442).